Reading from the N-terminus, the 319-residue chain is Probable arabinan endo-1,5-alpha-L-arabinosidase A (319 aa).

Residues 1 to 19 (MYLQSSLALVLLRAAVVHG) form the signal peptide. Asp-34 serves as the catalytic Proton acceptor. Asn-53 carries N-linked (GlcNAc...) asparagine glycosylation. Catalysis depends on Glu-198, which acts as the Proton donor.

The protein belongs to the glycosyl hydrolase 43 family.

The protein localises to the secreted. It catalyses the reaction Endohydrolysis of (1-&gt;5)-alpha-arabinofuranosidic linkages in (1-&gt;5)-arabinans.. The protein operates within glycan metabolism; L-arabinan degradation. In terms of biological role, endo-1,5-alpha-L-arabinanase involved in degradation of pectin. Its preferred substrate is linear 1,5-alpha-L-arabinan. The polypeptide is Probable arabinan endo-1,5-alpha-L-arabinosidase A (abnA) (Aspergillus flavus (strain ATCC 200026 / FGSC A1120 / IAM 13836 / NRRL 3357 / JCM 12722 / SRRC 167)).